Reading from the N-terminus, the 139-residue chain is MKLTQGAFSFLPDLTDAQVTKQIQYALNKSWAISIEYTDDPHPRNSYWEMWGLPLFDVKDPAAILFEINMARKAKPNYYLKIACFDNTRGIESCVLSFIVQRPSYEPGFKMTRQEVKGRQLVYTLESYSVDAKPEGERY.

It belongs to the RuBisCO small chain family. As to quaternary structure, heterohexadecamer of 8 large and 8 small subunits.

Its subcellular location is the plastid. The protein localises to the chloroplast. Functionally, ruBisCO catalyzes two reactions: the carboxylation of D-ribulose 1,5-bisphosphate, the primary event in carbon dioxide fixation, as well as the oxidative fragmentation of the pentose substrate in the photorespiration process. Both reactions occur simultaneously and in competition at the same active site. Although the small subunit is not catalytic it is essential for maximal activity. This Chrysotila carterae (Marine alga) protein is Ribulose bisphosphate carboxylase small subunit.